A 588-amino-acid chain; its full sequence is Zeta-carotene desaturase, chloroplastic/chromoplastic (588 aa).

Residues 1–49 (MATCSAYLCCPATSASLKKRVFPDGSAGFLFFGGRRLSNRLVTPKSVIR) constitute a chloroplast and chromoplast transit peptide.

This sequence belongs to the zeta carotene desaturase family. Monomer and dimer. It depends on decylplastoquinone as a cofactor. Requires 6-decylubiquinone as cofactor.

It localises to the plastid. It is found in the chloroplast. Its subcellular location is the chromoplast. The catalysed reaction is 9,9'-di-cis-zeta-carotene + 2 a quinone = 7,7',9,9'-tetra-cis-lycopene + 2 a quinol. Its pathway is carotenoid biosynthesis; lycopene biosynthesis. Functionally, catalyzes the conversion of zeta-carotene to lycopene via the intermediary of neurosporene. It carries out two consecutive desaturations (introduction of double bonds) at positions C-7 and C-7'. Shows stereoselectivity toward trans C15-C15'zeta-carotene double bond. The zeta-carotene produced by the phytoene desaturase PDS has a C15-C15' double bond in the cis configuration and it requires isomerization before being recognized as substrate by ZDS. No activity with all-trans-zeta-carotene. The main product is 7,9,7',9'-tetra-cis-lycopene (pro-lycopene). The chain is Zeta-carotene desaturase, chloroplastic/chromoplastic (ZDS) from Capsicum annuum (Capsicum pepper).